The primary structure comprises 356 residues: Protein RecA (356 aa).

68–75 (GPESSGKT) lines the ATP pocket.

Belongs to the RecA family.

It localises to the cytoplasm. Functionally, can catalyze the hydrolysis of ATP in the presence of single-stranded DNA, the ATP-dependent uptake of single-stranded DNA by duplex DNA, and the ATP-dependent hybridization of homologous single-stranded DNAs. It interacts with LexA causing its activation and leading to its autocatalytic cleavage. The chain is Protein RecA from Clostridium botulinum (strain Alaska E43 / Type E3).